A 102-amino-acid chain; its full sequence is Small ribosomal subunit protein uS10 (102 aa).

This sequence belongs to the universal ribosomal protein uS10 family. As to quaternary structure, part of the 30S ribosomal subunit.

In terms of biological role, involved in the binding of tRNA to the ribosomes. This chain is Small ribosomal subunit protein uS10, found in Latilactobacillus sakei subsp. sakei (strain 23K) (Lactobacillus sakei subsp. sakei).